The primary structure comprises 67 residues: ATP synthase F(0) complex subunit 8 (67 aa).

Residues 8–24 (TWFITIISSMITLFILF) traverse the membrane as a helical segment. Residue K54 is modified to N6-acetyllysine; alternate. K54 carries the N6-succinyllysine; alternate modification. At K57 the chain carries N6-acetyllysine.

It belongs to the ATPase protein 8 family. As to quaternary structure, component of the ATP synthase complex composed at least of ATP5F1A/subunit alpha, ATP5F1B/subunit beta, ATP5MC1/subunit c (homooctomer), MT-ATP6/subunit a, MT-ATP8/subunit 8, ATP5ME/subunit e, ATP5MF/subunit f, ATP5MG/subunit g, ATP5MK/subunit k, ATP5MJ/subunit j, ATP5F1C/subunit gamma, ATP5F1D/subunit delta, ATP5F1E/subunit epsilon, ATP5PF/subunit F6, ATP5PB/subunit b, ATP5PD/subunit d, ATP5PO/subunit OSCP. ATP synthase complex consists of a soluble F(1) head domain (subunits alpha(3) and beta(3)) - the catalytic core - and a membrane F(0) domain - the membrane proton channel (subunits c, a, 8, e, f, g, k and j). These two domains are linked by a central stalk (subunits gamma, delta, and epsilon) rotating inside the F1 region and a stationary peripheral stalk (subunits F6, b, d, and OSCP). Interacts with PRICKLE3.

The protein resides in the mitochondrion membrane. Subunit 8, of the mitochondrial membrane ATP synthase complex (F(1)F(0) ATP synthase or Complex V) that produces ATP from ADP in the presence of a proton gradient across the membrane which is generated by electron transport complexes of the respiratory chain. ATP synthase complex consist of a soluble F(1) head domain - the catalytic core - and a membrane F(1) domain - the membrane proton channel. These two domains are linked by a central stalk rotating inside the F(1) region and a stationary peripheral stalk. During catalysis, ATP synthesis in the catalytic domain of F(1) is coupled via a rotary mechanism of the central stalk subunits to proton translocation. In vivo, can only synthesize ATP although its ATP hydrolase activity can be activated artificially in vitro. Part of the complex F(0) domain. The chain is ATP synthase F(0) complex subunit 8 from Mus musculus (Mouse).